The following is a 479-amino-acid chain: Acyltransferase easC (479 aa).

H161 (proton acceptor) is an active-site residue.

Belongs to the plant acyltransferase family. Monomer.

Its pathway is antibiotic biosynthesis. Acyltransferase; part of the gene cluster that mediates the biosynthesis of emericellamides, secondary metabolites acting as antibiotics. The biosynthesis of emericellamides initiates from the highly reducing polyketide synthase easB which catalyzes the formation of the linear polyketide chain. EasB produces several polyketides that can be further processed by the downstream enzymes. The polyketides are released from easB as linear polyketide carboxylic acids, which are converted to CoA thioesters by the acyl-CoA ligase easD. The substrates are then loaded onto the acyltransferase easC, which shuttles them to the first thiolation (T) domain of the nonribosomal peptide synthetase easA. EasA then performs condensation of the polyketides with one glycine, two alanine, one valine and one leucine residues. A last step of cyclization leads to the production of emericellamides. In Emericella nidulans (strain FGSC A4 / ATCC 38163 / CBS 112.46 / NRRL 194 / M139) (Aspergillus nidulans), this protein is Acyltransferase easC.